A 777-amino-acid chain; its full sequence is Serine/threonine-protein kinase PTK2 (777 aa).

The interval 21–174 (NKLRGNNDST…ISSGSASSTN (154 aa)) is disordered. Positions 30–41 (TPAAAPAPVPTK) are enriched in low complexity. Composition is skewed to polar residues over residues 50-61 (AHISRSASTNTP) and 83-133 (RRST…SQHM). Positions 149-172 (SSVRGSSYSRHGSGSHISSGSASS) are enriched in low complexity. Residues 222–529 (DKDNKTIGSG…MEDLFNDPWF (308 aa)) form the Protein kinase domain. Residues 228-236 (IGSGGSSEV) and lysine 252 each bind ATP. Catalysis depends on aspartate 355, which acts as the Proton acceptor. Disordered regions lie at residues 564–705 (DAHP…EITE) and 728–764 (SVSG…KKVV). Polar residues-rich tracts occupy residues 575 to 592 (TDTN…AGTH) and 648 to 672 (TNTT…TNEF). A compositionally biased stretch (low complexity) spans 677–694 (NATTTDNDNVNTKATTAD). A compositionally biased stretch (polar residues) spans 744–756 (NRSIHSNATSTGT).

This sequence belongs to the protein kinase superfamily. Ser/Thr protein kinase family.

It catalyses the reaction L-seryl-[protein] + ATP = O-phospho-L-seryl-[protein] + ADP + H(+). It carries out the reaction L-threonyl-[protein] + ATP = O-phospho-L-threonyl-[protein] + ADP + H(+). The sequence is that of Serine/threonine-protein kinase PTK2 (PTK2) from Candida glabrata (strain ATCC 2001 / BCRC 20586 / JCM 3761 / NBRC 0622 / NRRL Y-65 / CBS 138) (Yeast).